We begin with the raw amino-acid sequence, 399 residues long: 26S proteasome regulatory subunit 10B homolog A (399 aa).

Threonine 2 bears the N-acetylthreonine mark. 180–187 (GPPGTGKT) lines the ATP pocket. Residue lysine 203 forms a Glycyl lysine isopeptide (Lys-Gly) (interchain with G-Cter in ubiquitin) linkage.

It belongs to the AAA ATPase family. In terms of assembly, component of the 19S regulatory particle (RP/PA700) base subcomplex of the 26S proteasome. The 26S proteasome is composed of a core protease (CP), known as the 20S proteasome, capped at one or both ends by the 19S regulatory particle (RP/PA700). The RP/PA700 complex is composed of at least 17 different subunits in two subcomplexes, the base and the lid, which form the portions proximal and distal to the 20S proteolytic core, respectively.

The protein resides in the cytoplasm. Its subcellular location is the nucleus. In terms of biological role, the 26S proteasome is involved in the ATP-dependent degradation of ubiquitinated proteins. The regulatory (or ATPase) complex confers ATP dependency and substrate specificity to the 26S complex. This is 26S proteasome regulatory subunit 10B homolog A (RPT4A) from Arabidopsis thaliana (Mouse-ear cress).